A 642-amino-acid polypeptide reads, in one-letter code: Conserved oligomeric Golgi complex subunit 6 (642 aa).

The protein belongs to the COG6 family. As to quaternary structure, component of the conserved oligomeric Golgi complex which is composed of eight different subunits and is required for normal Golgi morphology and localization.

The protein localises to the golgi apparatus membrane. Functionally, required for normal Golgi function. This chain is Conserved oligomeric Golgi complex subunit 6 (cogc-6), found in Caenorhabditis elegans.